The following is a 170-amino-acid chain: Shikimate kinase (170 aa).

11–16 (LSGKST) serves as a coordination point for ATP. S15 is a Mg(2+) binding site. Positions 33, 57, and 79 each coordinate substrate. R119 provides a ligand contact to ATP. R137 contacts substrate.

It belongs to the shikimate kinase family. Monomer. Mg(2+) is required as a cofactor.

The protein resides in the cytoplasm. It catalyses the reaction shikimate + ATP = 3-phosphoshikimate + ADP + H(+). Its pathway is metabolic intermediate biosynthesis; chorismate biosynthesis; chorismate from D-erythrose 4-phosphate and phosphoenolpyruvate: step 5/7. Its function is as follows. Catalyzes the specific phosphorylation of the 3-hydroxyl group of shikimic acid using ATP as a cosubstrate. The sequence is that of Shikimate kinase from Clostridium botulinum (strain Langeland / NCTC 10281 / Type F).